A 1319-amino-acid chain; its full sequence is MGPQLATVSLLLLTFFSNSIQYPHSPAATECPAYFNGNIAGNACSREYSICVNGVRQAATCSDDSVFYEDECVPVDESPECRVDENTEEDDTPYAEFDCTSKQDGIYSIGCSNQFISCVAGGAYMAKCPDSLVFNERTQDCRESCDEVKQDTTTAPQVYEDGEEGYGEASGEIAGDYERQPSNEQPDSIDFDCNGLEDGNYADGCNDVFYSCSNNMVFQRYCPPGTVFNINQQSCDFQCTTDDPTTTVSYSTSTITTPQEDDSEYSSTTSADVISTTTTPSIDAIETTTTGFDAVTTTTTTQTPFVCQEGQVNSFGMCSSRFNRCQNNSVRSKQCPVNTLFESSLVMCVFDLPQCQPITVPAAPAYNSYGPPSDTIVSPFDENVRLKPKFDRRRKYHHGKPSYGPVNGNSYLENPFFIPRHRGGSHRDHRRYGYGPAIDSPFSTAFRGRAALSDQFKDYRRARMGKIQGDARKVDGNKRFLIDDEFEGPNAKFVESNIEQVFPKNRHSKKQLGPHEDPDGYDDEKTFDAKDLFGATRRKRSAYYGTEQSVYGQQSAQISARQAQVNKDCQQYTTPTFLTFGDCFDQFIFCSGNGINRMAACPIGETFDKTLRSCSETCGVSTTIVAVTIGTQTSDDLSAPSEYIENDGVTTQSTWNDQPSTTQAPNSYESYTTQYSSNDVPSTSAAPIGDRCSLDASGLFSLGCSQKYIQCSNGAAIVRRCGESLYFNEATQECTYRDEVPECGSQGSTSSPVITTPGQDQSSNYYGIPSDDVPSTTQTPVGDRCAYVASGLFDLGCSQKYIQCSDSAASVRECEGSLYFDERSQSCRFRDEVFKCQTADVSSSSTVPYLDFTTTPASPSEDEPTTYEPSVAPYIPSVTVNPVDTCTSLSDGTHGTGCSSFYFVCSHGRLISSGNCQLGEGYDPSVQGCRTFSEIPARACDEQEVTTDAGLVQLMPYKTLEEVLTTTEAATTVANDGPTDTYITGSTKYSTTDSGEYTIPYGDETTSTRSYDRADNDSEDEEEDDVEHDQKCTVGSRTPVGFCVRTYLECTDAGNVEKLCRIGKLFDSHSNRCVPRIGCGKEAIRDAIKDMIATTPAPAQPKQFEGRCAHVDGEAVFSIGVCSSKYLRCSYGASKLQQCSEDRVFSNDKLECIVRESVSACTVPKNPSIKKYYTSNDQSAFCDGKEDGLYRNERDCSAILQCFGGELFEHPSCQSSLAFNQLTGKCDYPQKVSGCENHGQTNGECSEHGSFIADANNCEVFYRCVWGRKVVMTCPSGTVFNPLLSVCDWPSAVPSCSGQASDSNSSYGSSTYNDDKSGY.

The first 19 residues, 1–19 (MGPQLATVSLLLLTFFSNS), serve as a signal peptide directing secretion. 3 Chitin-binding type-2 domains span residues 28–83 (ATEC…ECRV), 96–141 (EFDC…TQDC), and 190–236 (DFDC…QSCD). Cystine bridges form between cysteine 61–cysteine 72, cysteine 128–cysteine 141, and cysteine 222–cysteine 235. The segment at 250-271 (YSTSTITTPQEDDSEYSSTTSA) is disordered. In terms of domain architecture, Chitin-binding type-2 4 spans 304–357 (PFVCQEGQVNSFGMCSSRFNRCQNNSVRSKQCPVNTLFESSLVMCVFDLPQCQP). Asparagine 327 carries an N-linked (GlcNAc...) asparagine glycan. Cysteine 335 and cysteine 348 form a disulfide bridge. The disordered stretch occupies residues 504 to 524 (KNRHSKKQLGPHEDPDGYDDE). Basic and acidic residues predominate over residues 513–524 (GPHEDPDGYDDE). Positions 566-614 (NKDCQQYTTPTFLTFGDCFDQFIFCSGNGINRMAACPIGETFDKTLRSC) constitute a Chitin-binding type-2 5 domain. An intrachain disulfide couples cysteine 601 to cysteine 614. Positions 649–682 (VTTQSTWNDQPSTTQAPNSYESYTTQYSSNDVPS) are disordered. 3 consecutive Chitin-binding type-2 domains span residues 689–745 (GDRC…ECGS), 782–838 (GDRC…KCQT), and 883–942 (VDTC…ACDE). Cysteine 721 and cysteine 734 are disulfide-bonded. The interval 742–764 (ECGSQGSTSSPVITTPGQDQSSN) is disordered. A compositionally biased stretch (polar residues) spans 745 to 764 (SQGSTSSPVITTPGQDQSSN). Cystine bridges form between cysteine 814-cysteine 827 and cysteine 916-cysteine 929. Positions 984 to 995 (TGSTKYSTTDSG) are enriched in polar residues. Residues 984 to 1031 (TGSTKYSTTDSGEYTIPYGDETTSTRSYDRADNDSEDEEEDDVEHDQK) are disordered. An N-linked (GlcNAc...) asparagine glycan is attached at asparagine 1016. Acidic residues predominate over residues 1017-1027 (DSEDEEEDDVE). Chitin-binding type-2 domains lie at 1029–1081 (DQKC…GCGK), 1105–1163 (EGRC…ACTV), 1179–1237 (SAFC…GCEN), and 1242–1298 (NGEC…SCSG). 4 disulfide bridges follow: cysteine 1060–cysteine 1073, cysteine 1139–cysteine 1152, cysteine 1213–cysteine 1226, and cysteine 1274–cysteine 1287. A compositionally biased stretch (low complexity) spans 1297–1312 (SGQASDSNSSYGSSTY). The interval 1297–1319 (SGQASDSNSSYGSSTYNDDKSGY) is disordered. Asparagine 1304 carries an N-linked (GlcNAc...) asparagine glycan.

It is found in the secreted. The protein resides in the extracellular space. It localises to the extracellular matrix. Functionally, in unfertilized oocytes, maintains egg-1 and egg-2 at the plasma membrane together with chitin synthase chs-1 and kinase mbk-2. Essential for the formation of a continuous and cohesive chitin layer following fertilization. In Caenorhabditis elegans, this protein is Chitin-binding domain protein cbd-1.